We begin with the raw amino-acid sequence, 533 residues long: Amidophosphoribosyltransferase (533 aa).

The active-site Nucleophile is the C2. The region spanning 2-238 is the Glutamine amidotransferase type-2 domain; it reads CGILALMLAD…PGECVFIRRS (237 aa). 2 residues coordinate Mg(2+): D383 and D384. S506 is modified (phosphoserine).

The protein in the C-terminal section; belongs to the purine/pyrimidine phosphoribosyltransferase family. Mg(2+) is required as a cofactor.

The catalysed reaction is 5-phospho-beta-D-ribosylamine + L-glutamate + diphosphate = 5-phospho-alpha-D-ribose 1-diphosphate + L-glutamine + H2O. It participates in purine metabolism; IMP biosynthesis via de novo pathway; N(1)-(5-phospho-D-ribosyl)glycinamide from 5-phospho-alpha-D-ribose 1-diphosphate: step 1/2. This chain is Amidophosphoribosyltransferase (ade4), found in Schizosaccharomyces pombe (strain 972 / ATCC 24843) (Fission yeast).